The following is a 363-amino-acid chain: Peptide chain release factor 2 (363 aa).

The residue at position 251 (Gln251) is an N5-methylglutamine.

This sequence belongs to the prokaryotic/mitochondrial release factor family. Methylated by PrmC. Methylation increases the termination efficiency of RF2.

The protein resides in the cytoplasm. In terms of biological role, peptide chain release factor 2 directs the termination of translation in response to the peptide chain termination codons UGA and UAA. The protein is Peptide chain release factor 2 of Helicobacter pylori (strain HPAG1).